Reading from the N-terminus, the 338-residue chain is Nicotinate-nucleotide--dimethylbenzimidazole phosphoribosyltransferase (338 aa).

Glu305 serves as the catalytic Proton acceptor.

The protein belongs to the CobT family.

The catalysed reaction is 5,6-dimethylbenzimidazole + nicotinate beta-D-ribonucleotide = alpha-ribazole 5'-phosphate + nicotinate + H(+). Its pathway is nucleoside biosynthesis; alpha-ribazole biosynthesis; alpha-ribazole from 5,6-dimethylbenzimidazole: step 1/2. Catalyzes the synthesis of alpha-ribazole-5'-phosphate from nicotinate mononucleotide (NAMN) and 5,6-dimethylbenzimidazole (DMB). In Novosphingobium aromaticivorans (strain ATCC 700278 / DSM 12444 / CCUG 56034 / CIP 105152 / NBRC 16084 / F199), this protein is Nicotinate-nucleotide--dimethylbenzimidazole phosphoribosyltransferase.